The sequence spans 1406 residues: DNA-directed RNA polymerase subunit beta' (1406 aa).

Zn(2+)-binding residues include C70, C72, C85, and C88. D460, D462, and D464 together coordinate Mg(2+). Zn(2+) is bound by residues C814, C888, C895, and C898.

This sequence belongs to the RNA polymerase beta' chain family. As to quaternary structure, the RNAP catalytic core consists of 2 alpha, 1 beta, 1 beta' and 1 omega subunit. When a sigma factor is associated with the core the holoenzyme is formed, which can initiate transcription. The cofactor is Mg(2+). Zn(2+) serves as cofactor.

The catalysed reaction is RNA(n) + a ribonucleoside 5'-triphosphate = RNA(n+1) + diphosphate. Its function is as follows. DNA-dependent RNA polymerase catalyzes the transcription of DNA into RNA using the four ribonucleoside triphosphates as substrates. In Yersinia pseudotuberculosis serotype O:1b (strain IP 31758), this protein is DNA-directed RNA polymerase subunit beta'.